Reading from the N-terminus, the 352-residue chain is [LysW]-L-2-aminoadipate/[LysW]-L-glutamate phosphate reductase (352 aa).

13 to 16 is an NADP(+) binding site; it reads SGYT. The active site involves Cys153. Asn319 is an NADP(+) binding site.

Belongs to the NAGSA dehydrogenase family. Type 1 subfamily. LysY sub-subfamily.

It localises to the cytoplasm. It carries out the reaction [amino-group carrier protein]-C-terminal-N-(1-carboxy-5-oxopentan-1-yl)-L-glutamine + phosphate + NADP(+) = [amino-group carrier protein]-C-terminal-N-(1-carboxy-5-phosphooxy-5-oxopentan-1-yl)-L-glutamine + NADPH + H(+). It catalyses the reaction [amino-group carrier protein]-C-terminal-gamma-(L-glutamyl-5-semialdehyde)-L-glutamate + phosphate + NADP(+) = [amino-group carrier protein]-C-terminal-gamma-(5-phospho-L-glutamyl)-L-glutamate + NADPH + H(+). It functions in the pathway amino-acid biosynthesis; L-lysine biosynthesis via AAA pathway; L-lysine from L-alpha-aminoadipate (Thermus route): step 3/5. It participates in amino-acid biosynthesis; L-arginine biosynthesis. Its function is as follows. Involved in both the arginine and lysine biosynthetic pathways. This is [LysW]-L-2-aminoadipate/[LysW]-L-glutamate phosphate reductase from Saccharolobus solfataricus (strain ATCC 35092 / DSM 1617 / JCM 11322 / P2) (Sulfolobus solfataricus).